The primary structure comprises 370 residues: GTPase Obg (370 aa).

Residues 1–159 (MKFIDEARIE…RMLRLELKVL (159 aa)) form the Obg domain. In terms of domain architecture, OBG-type G spans 160 to 334 (ADVGLLGMPN…LCYAIYDYLA (175 aa)). GTP-binding positions include 166 to 173 (GMPNAGKS), 191 to 195 (FTTLA), 213 to 216 (DIPG), 284 to 287 (NKLD), and 315 to 317 (SAL). Residues Ser-173 and Thr-193 each coordinate Mg(2+). Residues 344–370 (EEEDLATDVRFRDAPPADGGATPGGDA) are disordered.

Belongs to the TRAFAC class OBG-HflX-like GTPase superfamily. OBG GTPase family. Monomer. It depends on Mg(2+) as a cofactor.

It is found in the cytoplasm. In terms of biological role, an essential GTPase which binds GTP, GDP and possibly (p)ppGpp with moderate affinity, with high nucleotide exchange rates and a fairly low GTP hydrolysis rate. Plays a role in control of the cell cycle, stress response, ribosome biogenesis and in those bacteria that undergo differentiation, in morphogenesis control. The protein is GTPase Obg of Burkholderia ambifaria (strain MC40-6).